The sequence spans 406 residues: Enoyl-[acyl-carrier-protein] reductase [NADH] (406 aa).

Residues 48-53 (GASTGF), 74-75 (FE), 111-112 (DA), and 140-141 (IA) contribute to the NAD(+) site. Tyr-226 contributes to the substrate binding site. Catalysis depends on Tyr-236, which acts as the Proton donor. NAD(+)-binding positions include Lys-245 and 275–277 (LVT).

This sequence belongs to the TER reductase family. In terms of assembly, monomer.

It catalyses the reaction a 2,3-saturated acyl-[ACP] + NAD(+) = a (2E)-enoyl-[ACP] + NADH + H(+). It functions in the pathway lipid metabolism; fatty acid biosynthesis. Involved in the final reduction of the elongation cycle of fatty acid synthesis (FAS II). Catalyzes the reduction of a carbon-carbon double bond in an enoyl moiety that is covalently linked to an acyl carrier protein (ACP). The sequence is that of Enoyl-[acyl-carrier-protein] reductase [NADH] from Coxiella burnetii (strain CbuK_Q154) (Coxiella burnetii (strain Q154)).